Consider the following 50-residue polypeptide: MQTLSSAPDPAVSVAVTILAILLALTGFGLWTAFGPKAAKLTDPWDEHDD.

A helical transmembrane segment spans residues 14 to 34 (VAVTILAILLALTGFGLWTAF).

The protein belongs to the PsbN family.

It is found in the cellular thylakoid membrane. Its function is as follows. May play a role in photosystem I and II biogenesis. This is Protein PsbN from Prochlorococcus marinus (strain MIT 9312).